A 553-amino-acid polypeptide reads, in one-letter code: CTP synthase (553 aa).

The tract at residues 1 to 270 (MTKYVFVTGG…DDLICRELEL (270 aa)) is amidoligase domain. CTP is bound at residue Ser-13. Ser-13 is a UTP binding site. Residues 14 to 19 (SLGKGI) and Asp-71 contribute to the ATP site. Residues Asp-71 and Glu-144 each contribute to the Mg(2+) site. CTP contacts are provided by residues 151–153 (DIE), 191–196 (KTKPTQ), and Lys-227. Residues 191–196 (KTKPTQ) and Lys-227 each bind UTP. One can recognise a Glutamine amidotransferase type-1 domain in the interval 295-547 (TIGMVGKYVE…IKAALIHQDA (253 aa)). Position 356 (Gly-356) interacts with L-glutamine. The active-site Nucleophile; for glutamine hydrolysis is Cys-383. L-glutamine-binding positions include 384-387 (LGMQ), Glu-407, and Arg-473. Active-site residues include His-520 and Glu-522.

The protein belongs to the CTP synthase family. As to quaternary structure, homotetramer.

The catalysed reaction is UTP + L-glutamine + ATP + H2O = CTP + L-glutamate + ADP + phosphate + 2 H(+). The enzyme catalyses L-glutamine + H2O = L-glutamate + NH4(+). It carries out the reaction UTP + NH4(+) + ATP = CTP + ADP + phosphate + 2 H(+). It participates in pyrimidine metabolism; CTP biosynthesis via de novo pathway; CTP from UDP: step 2/2. With respect to regulation, allosterically activated by GTP, when glutamine is the substrate; GTP has no effect on the reaction when ammonia is the substrate. The allosteric effector GTP functions by stabilizing the protein conformation that binds the tetrahedral intermediate(s) formed during glutamine hydrolysis. Inhibited by the product CTP, via allosteric rather than competitive inhibition. Catalyzes the ATP-dependent amination of UTP to CTP with either L-glutamine or ammonia as the source of nitrogen. Regulates intracellular CTP levels through interactions with the four ribonucleotide triphosphates. In Polynucleobacter asymbioticus (strain DSM 18221 / CIP 109841 / QLW-P1DMWA-1) (Polynucleobacter necessarius subsp. asymbioticus), this protein is CTP synthase.